Consider the following 213-residue polypeptide: Protein GrpE (213 aa).

The tract at residues 1–61 is disordered; that stretch reads MEQGEKQVME…AEKAPTAEEL (61 aa). The span at 13–35 shows a compositional bias: acidic residues; it reads TYDEPEREQPIEEEAAPQPEEES.

This sequence belongs to the GrpE family. Homodimer.

Its subcellular location is the cytoplasm. Participates actively in the response to hyperosmotic and heat shock by preventing the aggregation of stress-denatured proteins, in association with DnaK and GrpE. It is the nucleotide exchange factor for DnaK and may function as a thermosensor. Unfolded proteins bind initially to DnaJ; upon interaction with the DnaJ-bound protein, DnaK hydrolyzes its bound ATP, resulting in the formation of a stable complex. GrpE releases ADP from DnaK; ATP binding to DnaK triggers the release of the substrate protein, thus completing the reaction cycle. Several rounds of ATP-dependent interactions between DnaJ, DnaK and GrpE are required for fully efficient folding. This Geobacillus kaustophilus (strain HTA426) protein is Protein GrpE.